The primary structure comprises 415 residues: Histidine--tRNA ligase (415 aa).

This sequence belongs to the class-II aminoacyl-tRNA synthetase family. Homodimer.

The protein localises to the cytoplasm. It catalyses the reaction tRNA(His) + L-histidine + ATP = L-histidyl-tRNA(His) + AMP + diphosphate + H(+). This is Histidine--tRNA ligase from Rickettsia canadensis (strain McKiel).